Here is an 85-residue protein sequence, read N- to C-terminus: N.vectensis toxin 1 4 (85 aa).

The N-terminal stretch at 1 to 20 is a signal peptide; it reads MASFKIVIVCLALLVAVASA. A propeptide spanning residues 21 to 36 is cleaved from the precursor; that stretch reads RRRDMMSDDELDYHYS. 3 disulfides stabilise this stretch: Cys-42/Cys-82, Cys-44/Cys-72, and Cys-65/Cys-83.

This sequence belongs to the sea anemone sodium channel inhibitory toxin family. Type II subfamily. As to expression, expressed in ectodermal glands and in clumps outside of the extodermal layer. Is not expressed in nematocytes. In adult female tissues, shows similar expression levels in mesenteries (gametes-producing tissue), tentacles, pharynx and physa.

The protein resides in the secreted. Functionally, binds to site 3 of voltage-gated sodium channels and inhibits the inactivation process. Is highly active on DmNav1/TipE (drosophila) and is only extremely weakly active on rat Nav1.4-beta-1/SCN4A-SCN1B, and on human Nav1.5-beta-1/SCN5A-beta-1. This reveals high specificity for arthropod over mammalian channels. In vivo, when released into the medium, this recombinant toxin induces impaired swimming, paralysis and death of the crustacean A.nauplii within several hours. Also causes paralysis of cherry shrimps immediately after injection at very low doses. Its effect on zebrafish (D.rerio) larvae is also rapid, since it induces tail twitching accompanied by impaired swimming after 20 minutes and complete paralysis within 45 minutes. It has also been observed to cause death of zebrafish larvae within 1 hour. This Nematostella vectensis (Starlet sea anemone) protein is N.vectensis toxin 1 4.